Reading from the N-terminus, the 170-residue chain is Opacity-related protein POPM3 (170 aa).

This sequence belongs to the opacity porin family.

The protein localises to the cell outer membrane. This Neisseria meningitidis serogroup C protein is Opacity-related protein POPM3 (opr).